The primary structure comprises 201 residues: MEAGEEIEDGEPSTPTYKAHHPPPHLPPPMRSSGVSLVLSVADLVLRFVAIGGTAGSAIAMATTSETLPFAAPFVRFRAEYSDLPTLMFFVVASSVVCAYLVLSLPASVVHVVRPGARSSRAILAFLDTVMLALLTASASAAAAIVYLAHRGSARANWLGICQQFTSFCQRITASLVGSFAAAVVLVALVFLSALSLARRA.

A compositionally biased stretch (acidic residues) spans 1 to 11 (MEAGEEIEDGE). Positions 1 to 26 (MEAGEEIEDGEPSTPTYKAHHPPPHL) are disordered. Topologically, residues 1 to 34 (MEAGEEIEDGEPSTPTYKAHHPPPHLPPPMRSSG) are cytoplasmic. Residues 35–55 (VSLVLSVADLVLRFVAIGGTA) traverse the membrane as a helical segment. The Extracellular segment spans residues 56 to 86 (GSAIAMATTSETLPFAAPFVRFRAEYSDLPT). The helical transmembrane segment at 87 to 107 (LMFFVVASSVVCAYLVLSLPA) threads the bilayer. At 108–128 (SVVHVVRPGARSSRAILAFLD) the chain is on the cytoplasmic side. The chain crosses the membrane as a helical span at residues 129–149 (TVMLALLTASASAAAAIVYLA). At 150–171 (HRGSARANWLGICQQFTSFCQR) the chain is on the extracellular side. A helical transmembrane segment spans residues 172-192 (ITASLVGSFAAAVVLVALVFL). Over 193 to 201 (SALSLARRA) the chain is Cytoplasmic.

This sequence belongs to the Casparian strip membrane proteins (CASP) family. Homodimer and heterodimers.

It is found in the cell membrane. Regulates membrane-cell wall junctions and localized cell wall deposition. Required for establishment of the Casparian strip membrane domain (CSD) and the subsequent formation of Casparian strips, a cell wall modification of the root endodermis that determines an apoplastic barrier between the intraorganismal apoplasm and the extraorganismal apoplasm and prevents lateral diffusion. This Oryza sativa subsp. japonica (Rice) protein is Casparian strip membrane protein 7.